The following is a 120-amino-acid chain: Chaperonin GroEL (120 aa).

23 to 27 (DGTTT) contacts ATP.

The protein belongs to the chaperonin (HSP60) family. Forms a cylinder of 14 subunits composed of two heptameric rings stacked back-to-back. Interacts with the co-chaperonin GroES.

The protein resides in the cytoplasm. It catalyses the reaction ATP + H2O + a folded polypeptide = ADP + phosphate + an unfolded polypeptide.. Together with its co-chaperonin GroES, plays an essential role in assisting protein folding. The GroEL-GroES system forms a nano-cage that allows encapsulation of the non-native substrate proteins and provides a physical environment optimized to promote and accelerate protein folding. The chain is Chaperonin GroEL from Mycolicibacterium vaccae (Mycobacterium vaccae).